A 364-amino-acid polypeptide reads, in one-letter code: UDP-N-acetylglucosamine--N-acetylmuramyl-(pentapeptide) pyrophosphoryl-undecaprenol N-acetylglucosamine transferase 1 (364 aa).

Residues 10–12, N124, S195, I250, and Q295 each bind UDP-N-acetyl-alpha-D-glucosamine; that span reads TGG.

This sequence belongs to the glycosyltransferase 28 family. MurG subfamily.

It localises to the cell membrane. It carries out the reaction di-trans,octa-cis-undecaprenyl diphospho-N-acetyl-alpha-D-muramoyl-L-alanyl-D-glutamyl-meso-2,6-diaminopimeloyl-D-alanyl-D-alanine + UDP-N-acetyl-alpha-D-glucosamine = di-trans,octa-cis-undecaprenyl diphospho-[N-acetyl-alpha-D-glucosaminyl-(1-&gt;4)]-N-acetyl-alpha-D-muramoyl-L-alanyl-D-glutamyl-meso-2,6-diaminopimeloyl-D-alanyl-D-alanine + UDP + H(+). The protein operates within cell wall biogenesis; peptidoglycan biosynthesis. Functionally, cell wall formation. Catalyzes the transfer of a GlcNAc subunit on undecaprenyl-pyrophosphoryl-MurNAc-pentapeptide (lipid intermediate I) to form undecaprenyl-pyrophosphoryl-MurNAc-(pentapeptide)GlcNAc (lipid intermediate II). This chain is UDP-N-acetylglucosamine--N-acetylmuramyl-(pentapeptide) pyrophosphoryl-undecaprenol N-acetylglucosamine transferase 1, found in Bacillus anthracis.